Reading from the N-terminus, the 195-residue chain is MFDIGFSELVLIFIVGLVVLGPQRLPIAIKTVMGWIRTIRGLAANVQNELAQELKLQELQESIKKAEKLNLTTLSPELSKTVEELKQSAQKMQSDLDAAKGEITKLTDEQVANIQNNIAQEEQNLATVQPETLQKSEENQPLVDTANAEENPSLSPAEIAEQAELDESQFAAYYPPDDDLASPTPSQPQDKQNVS.

The helical transmembrane segment at 1–21 (MFDIGFSELVLIFIVGLVVLG) threads the bilayer. The tract at residues 166–195 (DESQFAAYYPPDDDLASPTPSQPQDKQNVS) is disordered. Over residues 183 to 195 (PTPSQPQDKQNVS) the composition is skewed to polar residues.

It belongs to the TatB family. In terms of assembly, the Tat system comprises two distinct complexes: a TatABC complex, containing multiple copies of TatA, TatB and TatC subunits, and a separate TatA complex, containing only TatA subunits. Substrates initially bind to the TatABC complex, which probably triggers association of the separate TatA complex to form the active translocon.

It localises to the cell inner membrane. Part of the twin-arginine translocation (Tat) system that transports large folded proteins containing a characteristic twin-arginine motif in their signal peptide across membranes. Together with TatC, TatB is part of a receptor directly interacting with Tat signal peptides. TatB may form an oligomeric binding site that transiently accommodates folded Tat precursor proteins before their translocation. This is Sec-independent protein translocase protein TatB from Actinobacillus pleuropneumoniae serotype 5b (strain L20).